A 500-amino-acid chain; its full sequence is MAPPSAPLLEQAPGEVGPTRRRGRRPRALKFADVAVYFSSEEWGRLRPAQRTLYRDVMRETYGLLGALGCAGPKPALITWLERNTDDWEPAALDPQEYRRWVTFQRKTRTRQKNEEKEVFPPKDVPRKGKRGRKPSKPRLIARQTSGGPICPDCGCTFPDLPALESHKCAQNLKKPYPCPDCGRRFSYPSLLVSHRRAHSGECPYVCDQCGKRFSQRKNLSQHQVIHTGEKPYHCPDCGRCFRRSRSLANHRTTHTGEKPHQCPSCGRRFAYPSLLAIHQRTHTGEKPYTCLECSRRFRQRTALVIHQRIHTGEKPYPCPDCERRFSSSSRLVSHRRVHSGERPYACEHCEARFSQRSTLLQHQLLHTGEKPYPCPDCGRAFRRSGSLAIHRSTHTEEKLHACDDCGRRFAYPSLLASHRRVHSGERPYACDLCSKRFAQWSHLAQHQLLHTGEKPFPCLECGRCFRQRWSLAVHKCCPNTHNGSPRPLIGGPNQRSSAL.

Residues 1–24 are disordered; that stretch reads MAPPSAPLLEQAPGEVGPTRRRGR. A KRAB domain is found at 29 to 100; that stretch reads LKFADVAVYF…AALDPQEYRR (72 aa). Positions 110–144 are disordered; the sequence is TRQKNEEKEVFPPKDVPRKGKRGRKPSKPRLIARQ. The segment covering 112–127 has biased composition (basic and acidic residues); the sequence is QKNEEKEVFPPKDVPR. Positions 128 to 137 are enriched in basic residues; that stretch reads KGKRGRKPSK. The segment at 149-171 adopts a C2H2-type 1; degenerate zinc-finger fold; the sequence is PICPDCGCTFPDLPALESHKCAQ. 10 C2H2-type zinc fingers span residues 177 to 199, 205 to 227, 233 to 255, 261 to 283, 289 to 311, 317 to 339, 345 to 367, 373 to 395, 401 to 423, and 429 to 451; these read YPCPDCGRRFSYPSLLVSHRRAH, YVCDQCGKRFSQRKNLSQHQVIH, YHCPDCGRCFRRSRSLANHRTTH, HQCPSCGRRFAYPSLLAIHQRTH, YTCLECSRRFRQRTALVIHQRIH, YPCPDCERRFSSSSRLVSHRRVH, YACEHCEARFSQRSTLLQHQLLH, YPCPDCGRAFRRSGSLAIHRSTH, HACDDCGRRFAYPSLLASHRRVH, and YACDLCSKRFAQWSHLAQHQLLH. K455 is covalently cross-linked (Glycyl lysine isopeptide (Lys-Gly) (interchain with G-Cter in SUMO2)). Residues 457–482 form a C2H2-type 12 zinc finger; the sequence is FPCLECGRCFRQRWSLAVHKCCPNTH.

This sequence belongs to the krueppel C2H2-type zinc-finger protein family.

Its subcellular location is the nucleus. Functionally, may be involved in transcriptional regulation. The chain is Zinc finger protein 689 (Znf689) from Rattus norvegicus (Rat).